The sequence spans 370 residues: MAILSSQKQPLEPEPSKNPQSVQQPGLPPSTPEQGLLTAEVSPEERLSRTDDIRPQRLADYVGQKELKEVLQIAIQAAQSRREPLDHLLLYGPPGLGKTTISLILAAEMGVSCKVTSAPALERPRDIVGLLVNLKPGDVLFIDEIHRLARMTEELLYPAMEDFRLDITIGKGQSARTRSLPLPPFTLVGATTRVGSLTSPLRDRFGLIQRLRFYEPEELSQIILRTASLLKTELTPSAALEIARRSRGTPRIANRLLKRVRDFAEVKAAGTITETIASEALQLFNVDPCGLDWTDRRLLTVMIEHYGGGPVGLETIAAATGEEAQTIEEVYEPYLLQIGYLNRTPRGRVATLAAWKHLGYTPPDGQLSLL.

The segment at Met1 to Ile53 is disordered. Residues Pro13–Tyr214 form a large ATPase domain (RuvB-L) region. A compositionally biased stretch (basic and acidic residues) spans Pro43–Ile53. Residues Ile53, Arg54, Gly95, Lys98, Thr99, Thr100, Glu161–Phe163, Arg204, Tyr214, and Arg251 each bind ATP. Residue Thr99 coordinates Mg(2+). Residues Glu215–Asn285 are small ATPAse domain (RuvB-S). Residues Pro288 to Leu370 are head domain (RuvB-H). Residues Arg343 and Arg348 each coordinate DNA.

It belongs to the RuvB family. As to quaternary structure, homohexamer. Forms an RuvA(8)-RuvB(12)-Holliday junction (HJ) complex. HJ DNA is sandwiched between 2 RuvA tetramers; dsDNA enters through RuvA and exits via RuvB. An RuvB hexamer assembles on each DNA strand where it exits the tetramer. Each RuvB hexamer is contacted by two RuvA subunits (via domain III) on 2 adjacent RuvB subunits; this complex drives branch migration. In the full resolvosome a probable DNA-RuvA(4)-RuvB(12)-RuvC(2) complex forms which resolves the HJ.

Its subcellular location is the cytoplasm. The catalysed reaction is ATP + H2O = ADP + phosphate + H(+). Its function is as follows. The RuvA-RuvB-RuvC complex processes Holliday junction (HJ) DNA during genetic recombination and DNA repair, while the RuvA-RuvB complex plays an important role in the rescue of blocked DNA replication forks via replication fork reversal (RFR). RuvA specifically binds to HJ cruciform DNA, conferring on it an open structure. The RuvB hexamer acts as an ATP-dependent pump, pulling dsDNA into and through the RuvAB complex. RuvB forms 2 homohexamers on either side of HJ DNA bound by 1 or 2 RuvA tetramers; 4 subunits per hexamer contact DNA at a time. Coordinated motions by a converter formed by DNA-disengaged RuvB subunits stimulates ATP hydrolysis and nucleotide exchange. Immobilization of the converter enables RuvB to convert the ATP-contained energy into a lever motion, pulling 2 nucleotides of DNA out of the RuvA tetramer per ATP hydrolyzed, thus driving DNA branch migration. The RuvB motors rotate together with the DNA substrate, which together with the progressing nucleotide cycle form the mechanistic basis for DNA recombination by continuous HJ branch migration. Branch migration allows RuvC to scan DNA until it finds its consensus sequence, where it cleaves and resolves cruciform DNA. This Cyanothece sp. (strain PCC 7425 / ATCC 29141) protein is Holliday junction branch migration complex subunit RuvB.